The following is a 450-amino-acid chain: Tubulin alpha-1 chain (450 aa).

Residues Gln11, Glu71, Gly144, Thr145, Thr179, Asn206, and Asn228 each contribute to the GTP site. Glu71 provides a ligand contact to Mg(2+). Glu254 is a catalytic residue. Phosphothreonine is present on Thr349. Residues 431–450 form a disordered region; sequence DYEEVGGEGAEDDDEEGDEY.

This sequence belongs to the tubulin family. Dimer of alpha and beta chains. A typical microtubule is a hollow water-filled tube with an outer diameter of 25 nm and an inner diameter of 15 nM. Alpha-beta heterodimers associate head-to-tail to form protofilaments running lengthwise along the microtubule wall with the beta-tubulin subunit facing the microtubule plus end conferring a structural polarity. Microtubules usually have 13 protofilaments but different protofilament numbers can be found in some organisms and specialized cells. It depends on Mg(2+) as a cofactor. Undergoes a tyrosination/detyrosination cycle, the cyclic removal and re-addition of a C-terminal tyrosine residue by the enzymes tubulin tyrosine carboxypeptidase (TTCP) and tubulin tyrosine ligase (TTL), respectively.

It is found in the cytoplasm. Its subcellular location is the cytoskeleton. It carries out the reaction GTP + H2O = GDP + phosphate + H(+). Its function is as follows. Tubulin is the major constituent of microtubules, a cylinder consisting of laterally associated linear protofilaments composed of alpha- and beta-tubulin heterodimers. Microtubules grow by the addition of GTP-tubulin dimers to the microtubule end, where a stabilizing cap forms. Below the cap, tubulin dimers are in GDP-bound state, owing to GTPase activity of alpha-tubulin. This chain is Tubulin alpha-1 chain (TUBA1), found in Arabidopsis thaliana (Mouse-ear cress).